Here is a 423-residue protein sequence, read N- to C-terminus: 5-hydroxytryptamine receptor 1A (423 aa).

The tract at residues 1-20 (MEGLSPGQGNNTTSSEGPFG) is disordered. The Extracellular segment spans residues 1-38 (MEGLSPGQGNNTTSSEGPFGTRGNATGISDVTFSYQVI). A compositionally biased stretch (polar residues) spans 7–16 (GQGNNTTSSE). N-linked (GlcNAc...) asparagine glycosylation is found at N10, N11, and N24. Residues 39 to 59 (TSLLLGTLIFCAVLGNACVVA) traverse the membrane as a helical segment. At 60–73 (AIALERSLQNVANY) the chain is on the cytoplasmic side. A helical transmembrane segment spans residues 74–98 (LIGSLAVTDLMVSVLVLPMAALYQV). Residues 99-107 (LNKWTLGQV) are Extracellular-facing. The helical transmembrane segment at 108-132 (TCDLFIALDVLCCTSSILHLCAIAL) threads the bilayer. C109 and C187 are oxidised to a cystine. Residues D116 and C120 each coordinate serotonin. The short motif at 133 to 135 (DRY) is the DRY motif; important for ligand-induced conformation changes element. The Cytoplasmic segment spans residues 133–152 (DRYWAITDPIDYVNKRTPRR). The chain crosses the membrane as a helical span at residues 153–174 (AAALISLTWLIGFLISIPPMLG). Over 175–193 (WRTPEDRSDPDACTISKDH) the chain is Extracellular. Residues 194 to 216 (GYTIYSTFGAFYIPLLLMLVLYG) form a helical membrane-spanning segment. Residues 217-346 (RIFRAARFRI…LARERKTVKT (130 aa)) lie on the Cytoplasmic side of the membrane. Residues 235–277 (RKGADARSGVSPAPQPRKSVNGEPGGREWRQGPGSKAGGPLCT) form a disordered region. 3 residues coordinate 1D-myo-inositol 4-phosphate: K345, T346, and G352. A helical membrane pass occupies residues 347–370 (LGIIMGTFILCWLPFFIVALVLPF). The Extracellular segment spans residues 371 to 378 (CESSCHMP). A helical membrane pass occupies residues 379–403 (TLLGAIINWLGYSNSLLNPVIYAYF). The NPxxY motif; important for ligand-induced conformation changes and signaling motif lies at 396 to 400 (NPVIY). 1D-myo-inositol 4-phosphate is bound by residues F403, N404, and K405. Residues 404–423 (NKDFQNAFKKIVRCKFCRRR) are Cytoplasmic-facing.

It belongs to the G-protein coupled receptor 1 family. 5-hydroxytryptamine receptor subfamily. HTR1A sub-subfamily. As to quaternary structure, heterodimer; heterodimerizes with GPER1. Interacts with YIF1B. Interacts with GPR39 and GALR1.

Its subcellular location is the cell membrane. The protein resides in the cell projection. It is found in the dendrite. With respect to regulation, G-protein coupled receptor activity is regulated by lipids: phosphatidylinositol 4-phosphate increases HTR1A-mediated activity. Functionally, G-protein coupled receptor for 5-hydroxytryptamine (serotonin). Also functions as a receptor for various drugs and psychoactive substances. Ligand binding causes a conformation change that triggers signaling via guanine nucleotide-binding proteins (G proteins) and modulates the activity of downstream effectors, such as adenylate cyclase. HTR1A is coupled to G(i)/G(o) G alpha proteins and mediates inhibitory neurotransmission: signaling inhibits adenylate cyclase activity and activates a phosphatidylinositol-calcium second messenger system that regulates the release of Ca(2+) ions from intracellular stores. Beta-arrestin family members regulate signaling by mediating both receptor desensitization and resensitization processes. In Vulpes vulpes (Red fox), this protein is 5-hydroxytryptamine receptor 1A (HTR1A).